Reading from the N-terminus, the 213-residue chain is NAD(P)H-hydrate epimerase (213 aa).

A YjeF N-terminal domain is found at 8 to 210; sequence MYNIEENGHA…KIGIPPEAEK (203 aa). 55–59 contributes to the (6S)-NADPHX binding site; the sequence is NNGGD. K(+) contacts are provided by N56 and D122. Residues 126-132, Y137, and D155 each bind (6S)-NADPHX; that span reads GTGITGE. S158 provides a ligand contact to K(+).

Belongs to the NnrE/AIBP family. K(+) is required as a cofactor.

The enzyme catalyses (6R)-NADHX = (6S)-NADHX. It carries out the reaction (6R)-NADPHX = (6S)-NADPHX. Functionally, catalyzes the epimerization of the S- and R-forms of NAD(P)HX, a damaged form of NAD(P)H that is a result of enzymatic or heat-dependent hydration. This is a prerequisite for the S-specific NAD(P)H-hydrate dehydratase to allow the repair of both epimers of NAD(P)HX. This is NAD(P)H-hydrate epimerase from Cenarchaeum symbiosum (strain A).